The sequence spans 122 residues: UPF0102 protein VV1_0590 (122 aa).

It belongs to the UPF0102 family.

The sequence is that of UPF0102 protein VV1_0590 from Vibrio vulnificus (strain CMCP6).